Consider the following 163-residue polypeptide: Small ribosomal subunit protein bS6 (163 aa).

The disordered stretch occupies residues Glu97–Ala163. Positions Arg122–Ala163 are enriched in basic and acidic residues.

Belongs to the bacterial ribosomal protein bS6 family.

In terms of biological role, binds together with bS18 to 16S ribosomal RNA. This chain is Small ribosomal subunit protein bS6, found in Rhodospirillum centenum (strain ATCC 51521 / SW).